The following is a 992-amino-acid chain: UPF0182 protein BCG_3215c (992 aa).

The next 7 helical transmembrane spans lie at 18-38 (ILIMIALGVIVLLLAGPRLID), 63-83 (IVVCLVAGVVVGGIVFGGLAL), 113-133 (LVGIGIPAAIGLLAGIVAQSY), 175-195 (LVSVFLAFVANLVAHYIFGGI), 210-230 (VQLVSLVGVLVLLKAVAYWLD), 259-279 (KLILMAIALICAAAVFSAIAL), and 287-307 (IGLVLLLLSSLIVGAGWPLIV). A disordered region spans residues 906–938 (PTEAAVPPSPAANPPPPASGPQPPPVTAAPPVP). Residues 912–938 (PPSPAANPPPPASGPQPPPVTAAPPVP) show a composition bias toward pro residues.

It belongs to the UPF0182 family.

It is found in the cell membrane. The sequence is that of UPF0182 protein BCG_3215c from Mycobacterium bovis (strain BCG / Pasteur 1173P2).